Consider the following 741-residue polypeptide: MSLEDCYNVTQSYAAVAIHKEQTADYVEAIALFQKAKRNILMNPEFKYARERLHVMDYEDRHYVETLLCMLEQLTIRIEFLTKEIAQQEAAYKDIQNTQKSLVTQSSTGSANVAYISGNGPGDRSFIDDGNYSASSFERQNRTAPLQSKVTTASLKPNIPRTSMSSSPTASRTSLRKGAGELETHSAVKSAKKASVKSKSVLPPSKSLARTGLPAEVSTQNNANRAALLAWGSLNSSKPKHALPPSYISSEAAQASRSSFQVERHRPTPDNSAVIEAARRTYSSISSSSSPFKKKTQSHLPNRTTEVPSISKQLSKSSTSIATVAPSLASVSSVTKSPSPTPQSAPRAQSASTETAQDLDFLTPPRLSVNNPFLSDLYPASEQGLSSCEEKDSPVDGDEFFNHTNEEEIIEKQFQSTSISAMTSEKQEQILRECPDIDEELGKSILREIVVSGDEVHWDDISGLEFAKHSLKEAVVYPFLRPDLFQGLREPARGMLLFGPPGTGKTMLARAVATESRSVFFSISASSLTSKFLGESEKLVRALFTLAKKLSPSIIFVDEIDSLLSARSSDGNEHETSRRIKTEFLIQWSSLARAAASRQTADHPRVLVLAATNLPWCIDDAARRRFVRRTYIPLPDETTRRLHLNNLLKYQKHSLSLEDIEAIVKATEYYSGSDLTALAKDAAMGPLRSLGESLLFTKMESIRPINLDDFKTSIKVIRPSVNLQGLERYSEWDKEFGSQGH.

Positions 64-103 form a coiled coil; the sequence is VETLLCMLEQLTIRIEFLTKEIAQQEAAYKDIQNTQKSLV. The span at 137–155 shows a compositional bias: polar residues; sequence FERQNRTAPLQSKVTTASL. Disordered stretches follow at residues 137–214, 280–318, and 330–364; these read FERQ…TGLP, RTYS…SKSS, and SVSS…FLTP. 2 stretches are compositionally biased toward low complexity: residues 161 to 173 and 197 to 209; these read RTSM…ASRT and KSKS…KSLA. The span at 298 to 308 shows a compositional bias: polar residues; sequence SHLPNRTTEVP. Composition is skewed to low complexity over residues 309-318 and 330-344; these read SISKQLSKSS and SVSS…TPQS. Polar residues predominate over residues 346 to 356; sequence PRAQSASTETA. ATP is bound at residue 499–506; it reads GPPGTGKT.

Belongs to the AAA ATPase family.

It is found in the cytoplasm. Its subcellular location is the nucleus. This is an uncharacterized protein from Schizosaccharomyces pombe (strain 972 / ATCC 24843) (Fission yeast).